A 583-amino-acid polypeptide reads, in one-letter code: Putative amidase C869.01 (583 aa).

The N-terminal stretch at methionine 1–alanine 19 is a signal peptide. Active-site charge relay system residues include lysine 141 and serine 222. The Acyl-ester intermediate role is filled by serine 246.

This sequence belongs to the amidase family.

The protein resides in the cytoplasm. The catalysed reaction is a monocarboxylic acid amide + H2O = a monocarboxylate + NH4(+). This Schizosaccharomyces pombe (strain 972 / ATCC 24843) (Fission yeast) protein is Putative amidase C869.01.